The primary structure comprises 315 residues: Rab effector Noc2 (315 aa).

The RabBD domain occupies 41-158 (QRRKQHLSPA…KRSGAWFYKG (118 aa)). The segment at 89 to 146 (GNGLSQCLLCGEVLGFLGSSSVFCKDCRKKVCTKCGIEASPGQKRPLWLCKICSEQRE) adopts an FYVE-type zinc-finger fold. Zn(2+) contacts are provided by Cys95, Cys98, Cys112, Cys115, Cys120, Cys123, Cys138, and Cys141. Residues 170-315 (GRADDPHFRP…APAGPSSCLG (146 aa)) form a disordered region. Composition is skewed to basic and acidic residues over residues 184 to 193 (PAEREPRSSE) and 221 to 240 (LEDR…KPWK). Over residues 262-275 (GCQSSLASGETGTG) the composition is skewed to polar residues. Residues 298 to 315 (GRAPAADAAPAGPSSCLG) show a composition bias toward low complexity.

In terms of assembly, recruited to dense-core vesicles through specific interaction with RAB27A in endocrine cells. Interacts with RAB3A, RAB3B, RAB3C and RAB3D. Interacts with ZYX. In terms of tissue distribution, moderate to high levels of expression in thyroid, ovary, stomach, heart, pancreas, skeletal muscle, kidney and liver. Also detected in epithelial cells.

The protein resides in the cytoplasm. The protein localises to the cytoplasmic vesicle. It localises to the secretory vesicle membrane. In terms of biological role, rab GTPase effector involved in the late steps of regulated exocytosis, both in endocrine and exocrine cells. Acts as a potential RAB3B effector protein in epithelial cells. The chain is Rab effector Noc2 (RPH3AL) from Homo sapiens (Human).